A 243-amino-acid polypeptide reads, in one-letter code: MRTPTHDEFSGRLDSLNGDRSNVFGPELGEFSNADRRADELGDKETKTGTTTVGIKTEEGVVLATDMRASMGYMVSSKDVQKVEEIHPTGALTIAGSVSAAQSLISSLRAEVRLYEARRGEDMSMQALSTLVGNFLRSGGFYVVQPILGGVDETGPHIYSIDPAGSILEEEYTVTGSGSQYALGVLEQEFEDGLSIEEAKGVATKAIRSAVERDLASGNGINIAVVTEDGVDIQRHQNFEGLE.

Basic and acidic residues-rich tracts occupy residues 1–11 (MRTPTHDEFSG) and 33–47 (NADR…KETK). Residues 1–49 (MRTPTHDEFSGRLDSLNGDRSNVFGPELGEFSNADRRADELGDKETKTG) constitute a propeptide, removed in mature form; by autocatalysis. Residues 1–50 (MRTPTHDEFSGRLDSLNGDRSNVFGPELGEFSNADRRADELGDKETKTGT) are disordered. Catalysis depends on Thr-50, which acts as the Nucleophile. At Ser-129 the chain carries Phosphoserine.

This sequence belongs to the peptidase T1B family. As to quaternary structure, the 20S proteasome core is composed of 14 alpha and 14 beta subunits that assemble into four stacked heptameric rings, resulting in a barrel-shaped structure. The two inner rings, each composed of seven catalytic beta subunits, are sandwiched by two outer rings, each composed of seven alpha subunits. H.volcanii produces at least 2 types of 20S proteasomes: an alpha1-beta proteasome and a proteasome containing all three subunits (alpha1, alpha2, and beta) that appears to be asymmetrical with homo-oligomeric alpha1 and alpha2 rings positioned on separate ends. The catalytic chamber with the active sites is on the inside of the barrel. Has probably a gated structure, the ends of the cylinder being occluded by the N-termini of the alpha-subunits. Is likely capped at one or both ends by the proteasome regulatory ATPase, PAN.

It localises to the cytoplasm. The enzyme catalyses Cleavage of peptide bonds with very broad specificity.. The formation of the proteasomal ATPase PAN-20S proteasome complex, via the docking of the C-termini of PAN into the intersubunit pockets in the alpha-rings, triggers opening of the gate for substrate entry. Interconversion between the open-gate and close-gate conformations leads to a dynamic regulation of the 20S proteasome proteolysis activity. In vitro, the chymotrypsin-like activity of the alpha1-beta proteasome is potently inhibited by carbobenzoxyl-leucinyl-leucinyl-leucinal-H (MG132) and significantly by N-acetyl-leucinyl-leucinyl-norleucinal-H (calpain inhibitor I). Its function is as follows. Component of the proteasome core, a large protease complex with broad specificity involved in protein degradation. The H.volcanii alpha1-beta proteasome is able to cleave oligopeptides after Phe, Tyr and Trp, poorly after Glu but not after Arg. Thus, displays chymotrypsin-like activity, low caspase-like activity but no trypsin-like activity. The sequence is that of Proteasome subunit beta from Haloferax volcanii (strain ATCC 29605 / DSM 3757 / JCM 8879 / NBRC 14742 / NCIMB 2012 / VKM B-1768 / DS2) (Halobacterium volcanii).